We begin with the raw amino-acid sequence, 225 residues long: GTP:AMP phosphotransferase, mitochondrial (225 aa).

24–29 (GSGKGT) contributes to the GTP binding site. Positions 45-74 (SSGDILRQEIKSESTLGREATTYIAQGKLL) are NMP. Residues Ser46, Arg51, 72-74 (KLL), 103-106 (GFPR), and Gln110 contribute to the AMP site. Residues 144-181 (NRYVHVPSGRVYNLQYNPPKVPGLDDITGEPLTKRLDD) are LID. GTP-binding positions include Arg145 and 154 to 155 (VY). AMP is bound by residues Arg178 and Arg189. GTP is bound at residue Ser218.

It belongs to the adenylate kinase family. AK3 subfamily. In terms of assembly, monomer.

Its subcellular location is the mitochondrion matrix. The enzyme catalyses a ribonucleoside 5'-triphosphate + AMP = a ribonucleoside 5'-diphosphate + ADP. Its function is as follows. Involved in maintaining the homeostasis of cellular nucleotides by catalyzing the interconversion of nucleoside phosphates. Has GTP:AMP phosphotransferase and ITP:AMP phosphotransferase activities. Does not accept ATP as phosphate donor. In Saccharomyces cerevisiae (strain ATCC 204508 / S288c) (Baker's yeast), this protein is GTP:AMP phosphotransferase, mitochondrial.